Reading from the N-terminus, the 241-residue chain is 1-(5-phosphoribosyl)-5-[(5-phosphoribosylamino)methylideneamino] imidazole-4-carboxamide isomerase (241 aa).

Catalysis depends on Asp-8, which acts as the Proton acceptor. Asp-127 functions as the Proton donor in the catalytic mechanism.

It belongs to the HisA/HisF family.

Its subcellular location is the cytoplasm. The enzyme catalyses 1-(5-phospho-beta-D-ribosyl)-5-[(5-phospho-beta-D-ribosylamino)methylideneamino]imidazole-4-carboxamide = 5-[(5-phospho-1-deoxy-D-ribulos-1-ylimino)methylamino]-1-(5-phospho-beta-D-ribosyl)imidazole-4-carboxamide. It functions in the pathway amino-acid biosynthesis; L-histidine biosynthesis; L-histidine from 5-phospho-alpha-D-ribose 1-diphosphate: step 4/9. The sequence is that of 1-(5-phosphoribosyl)-5-[(5-phosphoribosylamino)methylideneamino] imidazole-4-carboxamide isomerase from Thermotoga petrophila (strain ATCC BAA-488 / DSM 13995 / JCM 10881 / RKU-1).